Consider the following 312-residue polypeptide: Aspartate carbamoyltransferase catalytic subunit (312 aa).

Positions 58 and 59 each coordinate carbamoyl phosphate. K86 is an L-aspartate binding site. The carbamoyl phosphate site is built by R108, H136, and Q139. L-aspartate contacts are provided by R169 and R223. Residues G264 and P265 each coordinate carbamoyl phosphate.

Belongs to the aspartate/ornithine carbamoyltransferase superfamily. ATCase family. Heterododecamer (2C3:3R2) of six catalytic PyrB chains organized as two trimers (C3), and six regulatory PyrI chains organized as three dimers (R2).

It catalyses the reaction carbamoyl phosphate + L-aspartate = N-carbamoyl-L-aspartate + phosphate + H(+). It participates in pyrimidine metabolism; UMP biosynthesis via de novo pathway; (S)-dihydroorotate from bicarbonate: step 2/3. In terms of biological role, catalyzes the condensation of carbamoyl phosphate and aspartate to form carbamoyl aspartate and inorganic phosphate, the committed step in the de novo pyrimidine nucleotide biosynthesis pathway. This Desulfitobacterium hafniense (strain DSM 10664 / DCB-2) protein is Aspartate carbamoyltransferase catalytic subunit.